Consider the following 396-residue polypeptide: Elongation factor Tu (396 aa).

The tr-type G domain maps to 10–206 (KPHCNIGTIG…AVDAYIPQPE (197 aa)). Positions 19–26 (GHVDHGKT) are G1. 19–26 (GHVDHGKT) is a binding site for GTP. Residue T26 coordinates Mg(2+). The tract at residues 60 to 64 (GITIS) is G2. The interval 81 to 84 (DCPG) is G3. Residues 81-85 (DCPGH) and 136-139 (NKVD) each bind GTP. The tract at residues 136-139 (NKVD) is G4. The tract at residues 174–176 (SAL) is G5.

This sequence belongs to the TRAFAC class translation factor GTPase superfamily. Classic translation factor GTPase family. EF-Tu/EF-1A subfamily. In terms of assembly, monomer.

The protein resides in the cytoplasm. The catalysed reaction is GTP + H2O = GDP + phosphate + H(+). In terms of biological role, GTP hydrolase that promotes the GTP-dependent binding of aminoacyl-tRNA to the A-site of ribosomes during protein biosynthesis. The sequence is that of Elongation factor Tu from Gluconacetobacter diazotrophicus (strain ATCC 49037 / DSM 5601 / CCUG 37298 / CIP 103539 / LMG 7603 / PAl5).